We begin with the raw amino-acid sequence, 83 residues long: MDRLEHTMMFKSQGGDVSPQEILQQVYVALEEKGYDPINQLVGYLMSGDPVYITSHNQARSLIRKLERYELLEELVRSYLQEK.

This sequence belongs to the UPF0297 family.

This is UPF0297 protein DSY2420 from Desulfitobacterium hafniense (strain Y51).